The chain runs to 350 residues: Probable dual-specificity RNA methyltransferase RlmN (350 aa).

The active-site Proton acceptor is Glu-91. In terms of domain architecture, Radical SAM core spans 97–327 (YHHGNSVCIS…VTIRREMGRD (231 aa)). Cys-104 and Cys-332 form a disulfide bridge. [4Fe-4S] cluster contacts are provided by Cys-111, Cys-115, and Cys-118. S-adenosyl-L-methionine-binding positions include 158–159 (GE), Ser-190, 213–215 (SLH), and Asn-289. Cys-332 acts as the S-methylcysteine intermediate in catalysis.

This sequence belongs to the radical SAM superfamily. RlmN family. It depends on [4Fe-4S] cluster as a cofactor.

Its subcellular location is the cytoplasm. The catalysed reaction is adenosine(2503) in 23S rRNA + 2 reduced [2Fe-2S]-[ferredoxin] + 2 S-adenosyl-L-methionine = 2-methyladenosine(2503) in 23S rRNA + 5'-deoxyadenosine + L-methionine + 2 oxidized [2Fe-2S]-[ferredoxin] + S-adenosyl-L-homocysteine. It carries out the reaction adenosine(37) in tRNA + 2 reduced [2Fe-2S]-[ferredoxin] + 2 S-adenosyl-L-methionine = 2-methyladenosine(37) in tRNA + 5'-deoxyadenosine + L-methionine + 2 oxidized [2Fe-2S]-[ferredoxin] + S-adenosyl-L-homocysteine. Its function is as follows. Specifically methylates position 2 of adenine 2503 in 23S rRNA and position 2 of adenine 37 in tRNAs. The chain is Probable dual-specificity RNA methyltransferase RlmN from Lachnospira eligens (strain ATCC 27750 / DSM 3376 / VPI C15-48 / C15-B4) (Eubacterium eligens).